The primary structure comprises 660 residues: RalBP1-associated Eps domain-containing protein 2 (660 aa).

Residues Glu-34–Glu-147 enclose the EH 1 domain. The disordered stretch occupies residues Glu-169–Leu-208. Position 254 is a phosphoserine (Ser-254). One can recognise an EH 2 domain in the interval Gln-282–Phe-373. An EF-hand domain is found at Leu-315–Arg-350. Asp-328, Asp-330, Asp-332, and Glu-339 together coordinate Ca(2+). The interval Asn-433–Ile-616 is disordered. Thr-479 is modified (phosphothreonine). Ser-493 carries the post-translational modification Phosphoserine. A compositionally biased stretch (pro residues) spans Leu-512–Cys-523. Residues Pro-514–Leu-660 are interaction with RALBP1. Positions Pro-561 to Leu-660 are interaction with ASAP1. The span at Pro-582–Thr-594 shows a compositional bias: low complexity. Residues Val-601 to Val-657 adopt a coiled-coil conformation.

Interacts with EPN1; the interaction is direct. Interacts with EPS15; the interaction is direct. Interacts with EPS15L1. Interacts with RALBP1; can form a ternary complex with activated Ral (RALA or RALB). Interacts with ASAP1; the interaction is direct and this complex can bind paxillin. Also forms a ternary complex with RALBP1 and ASAP1. Interacts with GRB2. In terms of processing, tyrosine-phosphorylated upon stimulation of cells with EGF. Phosphorylation on Tyr-residues induces its association with the EGF receptor probably indirectly through an adapter like GRB2. Expressed at high levels in the cerebrum, cerebellum, lung, kidney, and testis. Weakly expressed in the kidney. Isoform 2 is down-regulated during progression of prostate cancer.

The protein localises to the cytoplasm. Involved in ligand-dependent receptor mediated endocytosis of the EGF and insulin receptors as part of the Ral signaling pathway. By controlling growth factor receptors endocytosis may regulate cell survival. Through ASAP1 may regulate cell adhesion and migration. This is RalBP1-associated Eps domain-containing protein 2 (REPS2) from Homo sapiens (Human).